Consider the following 346-residue polypeptide: Holliday junction branch migration complex subunit RuvB (346 aa).

The span at 1 to 11 (MTEQRTIASSA) shows a compositional bias: polar residues. The disordered stretch occupies residues 1–20 (MTEQRTIASSATREDEAADA). The large ATPase domain (RuvB-L) stretch occupies residues 1–183 (MTEQRTIASS…FGIVQRLEFY (183 aa)). ATP is bound by residues isoleucine 22, arginine 23, glycine 64, lysine 67, threonine 68, threonine 69, 130–132 (EDF), arginine 173, tyrosine 183, and arginine 220. Threonine 68 is a binding site for Mg(2+). The small ATPAse domain (RuvB-S) stretch occupies residues 184–254 (SPQELTRIVI…VAQAAMQMLK (71 aa)). A head domain (RuvB-H) region spans residues 257-346 (PEGFDELDRR…PAIGEPGDLF (90 aa)). Positions 293, 312, and 317 each coordinate DNA.

The protein belongs to the RuvB family. In terms of assembly, homohexamer. Forms an RuvA(8)-RuvB(12)-Holliday junction (HJ) complex. HJ DNA is sandwiched between 2 RuvA tetramers; dsDNA enters through RuvA and exits via RuvB. An RuvB hexamer assembles on each DNA strand where it exits the tetramer. Each RuvB hexamer is contacted by two RuvA subunits (via domain III) on 2 adjacent RuvB subunits; this complex drives branch migration. In the full resolvosome a probable DNA-RuvA(4)-RuvB(12)-RuvC(2) complex forms which resolves the HJ.

Its subcellular location is the cytoplasm. It catalyses the reaction ATP + H2O = ADP + phosphate + H(+). In terms of biological role, the RuvA-RuvB-RuvC complex processes Holliday junction (HJ) DNA during genetic recombination and DNA repair, while the RuvA-RuvB complex plays an important role in the rescue of blocked DNA replication forks via replication fork reversal (RFR). RuvA specifically binds to HJ cruciform DNA, conferring on it an open structure. The RuvB hexamer acts as an ATP-dependent pump, pulling dsDNA into and through the RuvAB complex. RuvB forms 2 homohexamers on either side of HJ DNA bound by 1 or 2 RuvA tetramers; 4 subunits per hexamer contact DNA at a time. Coordinated motions by a converter formed by DNA-disengaged RuvB subunits stimulates ATP hydrolysis and nucleotide exchange. Immobilization of the converter enables RuvB to convert the ATP-contained energy into a lever motion, pulling 2 nucleotides of DNA out of the RuvA tetramer per ATP hydrolyzed, thus driving DNA branch migration. The RuvB motors rotate together with the DNA substrate, which together with the progressing nucleotide cycle form the mechanistic basis for DNA recombination by continuous HJ branch migration. Branch migration allows RuvC to scan DNA until it finds its consensus sequence, where it cleaves and resolves cruciform DNA. This is Holliday junction branch migration complex subunit RuvB from Xanthomonas campestris pv. campestris (strain B100).